The sequence spans 76 residues: Conotoxin VnMEKL-0111 (76 aa).

Positions 1–18 (MKLTILFLVAAVLMSTQA) are cleaved as a signal peptide. Residues 19–45 (LIQHDGEKSQKAKMKFLTARTLSAKTR) constitute a propeptide that is removed on maturation. 3 disulfides stabilise this stretch: cysteine 49–cysteine 65, cysteine 56–cysteine 70, and cysteine 64–cysteine 74.

Belongs to the conotoxin O2 superfamily. In terms of tissue distribution, expressed by the venom duct.

It is found in the secreted. The chain is Conotoxin VnMEKL-0111 from Conus ventricosus (Mediterranean cone).